Consider the following 833-residue polypeptide: Coiled-coil domain-containing protein 110 (833 aa).

Residues 431-778 adopt a coiled-coil conformation; it reads LQNYLKESVQ…REYLNLSDKI (348 aa).

The protein localises to the nucleus. This is Coiled-coil domain-containing protein 110 (CCDC110) from Macaca fascicularis (Crab-eating macaque).